A 186-amino-acid polypeptide reads, in one-letter code: Calcium load-activated calcium channel homolog (186 aa).

At 1 to 6 the chain is on the cytoplasmic side; the sequence is MLGDCL. The helical transmembrane segment at 7-27 threads the bilayer; it reads LIIAIAFGTALAGEGITWLLV. At 28–87 the chain is on the lumenal side; that stretch reads YRSDHYKRLKADMDKKTKKLEKKKQEVGDTNDKNIKRKLEREEERLKATNRDMSMFKMKS. Residues 30 to 86 are a coiled coil; it reads SDHYKRLKADMDKKTKKLEKKKQEVGDTNDKNIKRKLEREEERLKATNRDMSMFKMK. Residues 88–108 form a helical membrane-spanning segment; sequence MFAIGLAFTALLSTFNSIFEG. At 109–134 the chain is on the cytoplasmic side; sequence RVVAKLPFYPIGFIQGLSHRNLIGED. Residues 135 to 151 constitute an intramembrane region (pore-forming); that stretch reads MTDCSFIFLYILCTMTV. The Cytoplasmic portion of the chain corresponds to 152 to 186; the sequence is RQNLQKILGFAPSRAMARQQSSPWAPPNSQMNYLR.

The protein belongs to the TMCO1 family. In terms of assembly, homodimer and homotetramer.

It is found in the endoplasmic reticulum membrane. Its function is as follows. Calcium-selective channel required to prevent calcium stores from overfilling. This Caenorhabditis elegans protein is Calcium load-activated calcium channel homolog.